Here is a 417-residue protein sequence, read N- to C-terminus: Gamma-glutamyl phosphate reductase (417 aa).

This sequence belongs to the gamma-glutamyl phosphate reductase family.

The protein resides in the cytoplasm. It carries out the reaction L-glutamate 5-semialdehyde + phosphate + NADP(+) = L-glutamyl 5-phosphate + NADPH + H(+). It participates in amino-acid biosynthesis; L-proline biosynthesis; L-glutamate 5-semialdehyde from L-glutamate: step 2/2. Its function is as follows. Catalyzes the NADPH-dependent reduction of L-glutamate 5-phosphate into L-glutamate 5-semialdehyde and phosphate. The product spontaneously undergoes cyclization to form 1-pyrroline-5-carboxylate. The protein is Gamma-glutamyl phosphate reductase of Serratia proteamaculans (strain 568).